Reading from the N-terminus, the 1043-residue chain is Peroxisomal ATPase PEX1 (1043 aa).

The interval 453–626 (ATPAIILDGK…SKNQIMKLNR (174 aa)) is AAA-cassette D1. Residues 461–468 (GKQGIGKT) and 738–745 (GYPGCGKT) each bind ATP. The tract at residues 733–926 (GILLYGYPGC…CYNAYLKSVH (194 aa)) is AAA-cassette D2.

It belongs to the AAA ATPase family. Interacts with PEX6; forming the PEX1-PEX6 AAA ATPase complex, which is composed of a heterohexamer formed by a trimer of PEX1-PEX6 dimers. The PEX1-PEX6 heterooligomers associate with the peroxisomal importomer via interaction of PEX6 with the peroxisomal membrane anchor PEX15.

Its subcellular location is the cytoplasm. It localises to the cytosol. The protein resides in the peroxisome membrane. It carries out the reaction ATP + H2O = ADP + phosphate + H(+). Component of the PEX1-PEX6 AAA ATPase complex, a protein dislocase complex that mediates the ATP-dependent extraction of the PEX5 receptor from peroxisomal membranes, an essential step for PEX5 recycling. Specifically recognizes PEX5 monoubiquitinated at 'Cys-6', and pulls it out of the peroxisome lumen through the PEX2-PEX10-PEX12 retrotranslocation channel. Extraction by the PEX1-PEX6 AAA ATPase complex is accompanied by unfolding of the TPR repeats and release of bound cargo from PEX5. This chain is Peroxisomal ATPase PEX1, found in Saccharomyces cerevisiae (strain ATCC 204508 / S288c) (Baker's yeast).